The primary structure comprises 217 residues: Translation initiation factor IF-3 (217 aa).

The interval Y185 to A217 is disordered. The segment covering E191–A217 has biased composition (basic and acidic residues).

It belongs to the IF-3 family. In terms of assembly, monomer.

The protein resides in the cytoplasm. In terms of biological role, IF-3 binds to the 30S ribosomal subunit and shifts the equilibrium between 70S ribosomes and their 50S and 30S subunits in favor of the free subunits, thus enhancing the availability of 30S subunits on which protein synthesis initiation begins. The chain is Translation initiation factor IF-3 from Methylacidiphilum infernorum (isolate V4) (Methylokorus infernorum (strain V4)).